The primary structure comprises 927 residues: Isoleucine--tRNA ligase (927 aa).

The 'HIGH' region signature appears at 57–67; sequence PFANGNIHMGH. E553 serves as a coordination point for L-isoleucyl-5'-AMP. The 'KMSKS' region motif lies at 594-598; it reads KMSKS. K597 is an ATP binding site. Zn(2+)-binding residues include C886, C889, C906, and C909.

Belongs to the class-I aminoacyl-tRNA synthetase family. IleS type 1 subfamily. Monomer. Zn(2+) serves as cofactor.

The protein localises to the cytoplasm. The catalysed reaction is tRNA(Ile) + L-isoleucine + ATP = L-isoleucyl-tRNA(Ile) + AMP + diphosphate. Its function is as follows. Catalyzes the attachment of isoleucine to tRNA(Ile). As IleRS can inadvertently accommodate and process structurally similar amino acids such as valine, to avoid such errors it has two additional distinct tRNA(Ile)-dependent editing activities. One activity is designated as 'pretransfer' editing and involves the hydrolysis of activated Val-AMP. The other activity is designated 'posttransfer' editing and involves deacylation of mischarged Val-tRNA(Ile). The protein is Isoleucine--tRNA ligase of Lactobacillus acidophilus (strain ATCC 700396 / NCK56 / N2 / NCFM).